A 122-amino-acid polypeptide reads, in one-letter code: Large ribosomal subunit protein uL22 (122 aa).

The tract at residues 103–122 (VEGKEMKSSKSHKKNQAEGK) is disordered.

The protein belongs to the universal ribosomal protein uL22 family. As to quaternary structure, part of the 50S ribosomal subunit.

Its function is as follows. This protein binds specifically to 23S rRNA; its binding is stimulated by other ribosomal proteins, e.g. L4, L17, and L20. It is important during the early stages of 50S assembly. It makes multiple contacts with different domains of the 23S rRNA in the assembled 50S subunit and ribosome. Functionally, the globular domain of the protein is located near the polypeptide exit tunnel on the outside of the subunit, while an extended beta-hairpin is found that lines the wall of the exit tunnel in the center of the 70S ribosome. The chain is Large ribosomal subunit protein uL22 from Helicobacter pylori (strain P12).